The chain runs to 501 residues: Tetrachloroethene reductive dehalogenase (501 aa).

The segment at residues 1–37 (MEKKKKPELSRRDFGKLIIGGGAAATIAPFGVPGANA) is a signal peptide (tat-type signal). Corrinoid contacts are provided by residues alanine 74, tyrosine 207, 309–314 (NGVGQS), 329–332 (MGAC), and 341–343 (VRL). A 4Fe-4S ferredoxin-type 1 domain is found at 356 to 386 (KPIDFGVTEFCETCKKCARECPSKAITEGPR). Residues cysteine 366, cysteine 369, cysteine 372, and cysteine 376 each contribute to the [4Fe-4S] cluster site. Residue 394–401 (HNQSGKLQ) participates in corrinoid binding. Cysteine 409 contributes to the [4Fe-4S] cluster binding site. Tyrosine 419 contacts corrinoid. The [4Fe-4S] cluster site is built by cysteine 420, cysteine 423, and cysteine 427. The 4Fe-4S ferredoxin-type 2 domain occupies 420–439 (CGVCVAVCPFTKGNIWIHDG).

The protein belongs to the PceA family. As to quaternary structure, monomer. [4Fe-4S] cluster is required as a cofactor. Requires corrinoid as cofactor. Predicted to be exported by the Tat system. The position of the signal peptide cleavage has not been experimentally proven.

The protein localises to the cytoplasm. It localises to the cell inner membrane. The enzyme catalyses trichloroethene + chloride + A + H(+) = tetrachloroethene + AH2. The catalysed reaction is trichloroethene + AH2 = (Z)-1,2-dichloroethene + chloride + A + H(+). Both the processed and unprocessed enzymes are catalytically active. PCE-dependent growth and PceA activity are inhibited in the presence of high concentrations of 5,6-dimethylbenzimidazole (DMB), probably due to the formation a DMB-containing nor-B12 cofactor. Dechlorination of PCE is stimulated by ammonium ions. Activity is inhibited by chlorinated methanes. Catalyzes the reductive dechlorination of tetrachloroethene (PCE) to trichloroethene (TCE) and of trichloroethene to cis-1,2-dichloroethene (DCE). In addition, trans-1,3-dichloropropene, 1,1,3-trichloropropene and 2,3-dichloropropene are reduced to a mixture of mono-chloropropenes, 1,1-dichloropropene, and 2-chloropropene, respectively. Is also able to convert brominated phenols such as 4-bromophenol (4-BP), 2,4-dibromophenol (2,4-DBP) and 2,4,6-tribromophenol (2,4,6-TBP). Utilizes formate or pyruvate as electron donors. Titanium(III) citrate could also serve as electron donor. Reduced methyl viologen can act as the artificial electron donor. The polypeptide is Tetrachloroethene reductive dehalogenase (Sulfurospirillum multivorans (Dehalospirillum multivorans)).